A 104-amino-acid chain; its full sequence is ATP-dependent Clp protease adapter protein ClpS (104 aa).

The protein belongs to the ClpS family. In terms of assembly, binds to the N-terminal domain of the chaperone ClpA.

Functionally, involved in the modulation of the specificity of the ClpAP-mediated ATP-dependent protein degradation. The chain is ATP-dependent Clp protease adapter protein ClpS from Nitratidesulfovibrio vulgaris (strain ATCC 29579 / DSM 644 / CCUG 34227 / NCIMB 8303 / VKM B-1760 / Hildenborough) (Desulfovibrio vulgaris).